A 947-amino-acid chain; its full sequence is Bifunctional glutamine synthetase adenylyltransferase/adenylyl-removing enzyme (947 aa).

The interval 1–440 (MTPLSSPLSQ…VFNELIGDDE (440 aa)) is adenylyl removase. Residues 450 to 947 (SEPWREVWQD…ASWRKWLVAV (498 aa)) form an adenylyl transferase region.

This sequence belongs to the GlnE family. The cofactor is Mg(2+).

The enzyme catalyses [glutamine synthetase]-O(4)-(5'-adenylyl)-L-tyrosine + phosphate = [glutamine synthetase]-L-tyrosine + ADP. It carries out the reaction [glutamine synthetase]-L-tyrosine + ATP = [glutamine synthetase]-O(4)-(5'-adenylyl)-L-tyrosine + diphosphate. Functionally, involved in the regulation of glutamine synthetase GlnA, a key enzyme in the process to assimilate ammonia. When cellular nitrogen levels are high, the C-terminal adenylyl transferase (AT) inactivates GlnA by covalent transfer of an adenylyl group from ATP to specific tyrosine residue of GlnA, thus reducing its activity. Conversely, when nitrogen levels are low, the N-terminal adenylyl removase (AR) activates GlnA by removing the adenylyl group by phosphorolysis, increasing its activity. The regulatory region of GlnE binds the signal transduction protein PII (GlnB) which indicates the nitrogen status of the cell. This is Bifunctional glutamine synthetase adenylyltransferase/adenylyl-removing enzyme from Salmonella paratyphi B (strain ATCC BAA-1250 / SPB7).